Reading from the N-terminus, the 126-residue chain is E3 ubiquitin-protein ligase PPP1R11 (126 aa).

Positions 1 to 25 (MAEAGAGLSETVTETTVTVTTEPEN) are disordered. Residue alanine 2 is modified to N-acetylalanine. Over residues 10 to 22 (ETVTETTVTVTTE) the composition is skewed to low complexity. Positions 52–62 (HMGRRSSKCCC) are atypical RING finger domain 1. The tract at residues 70–126 (FGESSTESDEEEEEGCGHTHCVRGHRKGRRRATLGPTPTTPPQPPDPSQPPPGPMQH) is disordered. Phosphoserine occurs at positions 73 and 74. The residue at position 75 (threonine 75) is a Phosphothreonine. Serine 77 carries the post-translational modification Phosphoserine. Residues 85–94 (CGHTHCVRGH) are atypical RING finger domain 2. The span at 89–101 (HCVRGHRKGRRRA) shows a compositional bias: basic residues. Residues 107-126 (PTTPPQPPDPSQPPPGPMQH) show a composition bias toward pro residues. Residue threonine 109 is modified to Phosphothreonine.

As to quaternary structure, interacts with TLR2 and UBE2D2. Post-translationally, auto-ubiquitinated. In terms of tissue distribution, widely expressed.

It catalyses the reaction S-ubiquitinyl-[E2 ubiquitin-conjugating enzyme]-L-cysteine + [acceptor protein]-L-lysine = [E2 ubiquitin-conjugating enzyme]-L-cysteine + N(6)-ubiquitinyl-[acceptor protein]-L-lysine.. It functions in the pathway protein modification; protein ubiquitination. Functionally, atypical E3 ubiquitin-protein ligase which ubiquitinates TLR2 at 'Lys-754' leading to its degradation by the proteasome. Plays a role in regulating inflammatory cytokine release and gram-positive bacterial clearance by functioning, in part, through the ubiquitination and degradation of TLR2. Inhibitor of protein phosphatase 1. This Homo sapiens (Human) protein is E3 ubiquitin-protein ligase PPP1R11 (PPP1R11).